Consider the following 312-residue polypeptide: MAIYLDFENHIKEIQNEIELALIRGDEDAKEILEKRLDKEVKSIYSNLTDFQKLQLARHPDRPYAMDYIDLILKDKYEVFGDRHYNDDKAIVCFIGKIDNIPVVVIGEEKGRGTKNKLLRNFGMPNPCGYRKALKMAKFAEKFNLPILMLVDTAGAYPGIGAEERGQSEAIAKNLQEFASLKVPTISVIIGEGGSGGALAIAVADKLAMMEYSIFSVISPEGCAAILWDDPSKTEVAIKAMKITPRDLKEAGLIDDIILEPSKGAHRDKFSAANTIKEYFLDALRTIQQDPHFLDNRYQKLMSLGSFVESMN.

The CoA carboxyltransferase C-terminal domain maps to R36–T286.

This sequence belongs to the AccA family. Acetyl-CoA carboxylase is a heterohexamer composed of biotin carboxyl carrier protein (AccB), biotin carboxylase (AccC) and two subunits each of ACCase subunit alpha (AccA) and ACCase subunit beta (AccD).

Its subcellular location is the cytoplasm. It carries out the reaction N(6)-carboxybiotinyl-L-lysyl-[protein] + acetyl-CoA = N(6)-biotinyl-L-lysyl-[protein] + malonyl-CoA. The protein operates within lipid metabolism; malonyl-CoA biosynthesis; malonyl-CoA from acetyl-CoA: step 1/1. Component of the acetyl coenzyme A carboxylase (ACC) complex. First, biotin carboxylase catalyzes the carboxylation of biotin on its carrier protein (BCCP) and then the CO(2) group is transferred by the carboxyltransferase to acetyl-CoA to form malonyl-CoA. The sequence is that of Acetyl-coenzyme A carboxylase carboxyl transferase subunit alpha from Helicobacter pylori (strain G27).